Here is a 307-residue protein sequence, read N- to C-terminus: Nicotinamide/nicotinic acid mononucleotide adenylyltransferase 2 (307 aa).

The NAD(+) site is built by Ser-16 and Phe-17. An ATP-binding site is contributed by His-24. NAD(+)-binding residues include Trp-92 and Thr-95. 2 S-palmitoyl cysteine lipidation sites follow: Cys-164 and Cys-165. NAD(+) contacts are provided by Gly-200, Asp-202, Leu-212, Trp-213, and Arg-232. 271-274 (TKSR) lines the ATP pocket.

This sequence belongs to the eukaryotic NMN adenylyltransferase family. Monomer. Requires Mg(2+) as cofactor. In terms of processing, degraded in response to injured neurite. Degradation is caused by polyubiquitination by MYCBP2 after recognition by FBXO45. Post-translationally, palmitoylated; palmitoylation is required for membrane association.

The protein resides in the golgi apparatus membrane. The protein localises to the cytoplasmic vesicle membrane. Its subcellular location is the cytoplasm. It is found in the cell projection. It localises to the axon. It carries out the reaction beta-nicotinamide D-ribonucleotide + ATP + H(+) = diphosphate + NAD(+). It catalyses the reaction nicotinate beta-D-ribonucleotide + ATP + H(+) = deamido-NAD(+) + diphosphate. It participates in cofactor biosynthesis; NAD(+) biosynthesis; NAD(+) from nicotinamide D-ribonucleotide: step 1/1. Its pathway is cofactor biosynthesis; NAD(+) biosynthesis; deamido-NAD(+) from nicotinate D-ribonucleotide: step 1/1. Its activity is regulated as follows. Inhibited by P1-(adenosine-5')-P3-(nicotinamide-riboside-5')-triphosphate (Np3AD) and P1-(adenosine-5')-P4-(nicotinamide-riboside-5')-tetraphosphate (Np4AD). Nicotinamide/nicotinate-nucleotide adenylyltransferase that acts as an axon maintenance factor. Axon survival factor required for the maintenance of healthy axons: acts by delaying Wallerian axon degeneration, an evolutionarily conserved process that drives the loss of damaged axons. Catalyzes the formation of NAD(+) from nicotinamide mononucleotide (NMN) and ATP. Can also use the deamidated form; nicotinic acid mononucleotide (NaMN) as substrate but with a lower efficiency. Cannot use triazofurin monophosphate (TrMP) as substrate. Also catalyzes the reverse reaction, i.e. the pyrophosphorolytic cleavage of NAD(+). For the pyrophosphorolytic activity prefers NAD(+), NADH and NaAD as substrates and degrades nicotinic acid adenine dinucleotide phosphate (NHD) less effectively. Fails to cleave phosphorylated dinucleotides NADP(+), NADPH and NaADP(+). Also acts as an activator of ADP-ribosylation by supporting the catalytic activity of PARP16 and promoting mono-ADP-ribosylation of ribosomes by PARP16. May be involved in the maintenance of axonal integrity. This is Nicotinamide/nicotinic acid mononucleotide adenylyltransferase 2 (Nmnat2) from Rattus norvegicus (Rat).